Here is a 757-residue protein sequence, read N- to C-terminus: 17S U2 SnRNP complex component HTATSF1 (757 aa).

Disordered regions lie at residues Met-1 to Asp-54 and Ser-80 to Ser-123. N-acetylserine is present on Ser-2. The segment covering Ser-80 to Asn-94 has biased composition (polar residues). Residues Ala-97–Ser-123 are compositionally biased toward basic and acidic residues. RRM domains are found at residues Thr-134–Phe-219 and Arg-265–Gly-350. The U2AF homology motif (UHM) stretch occupies residues Arg-260–Tyr-354. Position 298 is an N6-acetyllysine (Lys-298). Residues Gly-382–Val-757 are mediates interaction with the P-TEFb complex. The tract at residues Leu-383–Ala-417 is disordered. Phosphoserine occurs at positions 388, 404, 408, and 410. Over residues Pro-407 to Ala-417 the composition is skewed to polar residues. Lys-431 participates in a covalent cross-link: Glycyl lysine isopeptide (Lys-Gly) (interchain with G-Cter in SUMO2). Positions Phe-432–Val-757 are disordered. 4 positions are modified to phosphoserine: Ser-441, Ser-446, Ser-519, and Ser-528. Composition is skewed to basic and acidic residues over residues Ala-445 to Glu-483 and Gly-497 to Ser-538. Over residues Glu-539 to Ser-551 the composition is skewed to acidic residues. Composition is skewed to basic and acidic residues over residues Ser-552–Asp-585 and Thr-595–Asp-609. A phosphoserine mark is found at Ser-556, Ser-560, Ser-578, Ser-598, Ser-604, Ser-613, Ser-621, Ser-645, Ser-679, Ser-705, Ser-724, and Ser-749. 3 stretches are compositionally biased toward acidic residues: residues Glu-610–Val-635, Asp-643–Ile-671, and Asp-678–Thr-688. Composition is skewed to basic and acidic residues over residues Asp-689–Leu-709 and Pro-716–Gly-737. The segment covering Ser-738–Ser-749 has biased composition (low complexity).

This sequence belongs to the HTATSF1 family. Component of the 17S U2 SnRNP complex, a ribonucleoprotein complex that contains small nuclear RNA (snRNA) U2 and a number of specific proteins. Within the 17S U2 SnRNP complex, interacts (via UHM region) directly with SF3B1. Component of a complex which is at least composed of HTATSF1/Tat-SF1, the P-TEFb complex components CDK9 and CCNT1, RNA polymerase II, SUPT5H, and NCL/nucleolin. Interacts with GTF2F2/RAP30 and POLR2A. Interacts with TCERG1/CA150. Interacts with (poly-ADP-ribosylated) RPA1; promoting HTATSF1 recruitment to DNA damage sites. Interacts (when phosphorylated) with TOPBP1; promoting recruitment of TOPBP1 to DNA damage sites during S-phase. In terms of processing, phosphorylation at Ser-749 by CK2 during S-phase in response to DNA damage promotes interaction with TOPBP1 and double-strand break (DSB) repair via homologous recombination.

The protein localises to the nucleus. It localises to the chromosome. Its function is as follows. Component of the 17S U2 SnRNP complex of the spliceosome, a large ribonucleoprotein complex that removes introns from transcribed pre-mRNAs. The 17S U2 SnRNP complex (1) directly participates in early spliceosome assembly and (2) mediates recognition of the intron branch site during pre-mRNA splicing by promoting the selection of the pre-mRNA branch-site adenosine, the nucleophile for the first step of splicing. Within the 17S U2 SnRNP complex, HTATSF1 is required to stabilize the branchpoint-interacting stem loop. HTATSF1 is displaced from the 17S U2 SnRNP complex before the stable addition of the 17S U2 SnRNP complex to the spliceosome, destabilizing the branchpoint-interacting stem loop and allowing to probe intron branch site sequences. Also acts as a regulator of transcriptional elongation, possibly by mediating the reciprocal stimulatory effect of splicing on transcriptional elongation. Involved in double-strand break (DSB) repair via homologous recombination in S-phase by promoting the recruitment of TOPBP1 to DNA damage sites. Mechanistically, HTATSF1 is (1) recruited to DNA damage sites in S-phase via interaction with poly-ADP-ribosylated RPA1 and (2) phosphorylated by CK2, promoting recruitment of TOPBP1, thereby facilitating RAD51 nucleofilaments formation and RPA displacement, followed by homologous recombination. In Mus musculus (Mouse), this protein is 17S U2 SnRNP complex component HTATSF1 (Htatsf1).